The sequence spans 436 residues: Drebrin-like protein (436 aa).

Positions 2–133 constitute an ADF-H domain; it reads AVNLSRNGPA…EPECIMEKVA (132 aa). The residue at position 26 (Thr26) is a Phosphothreonine. Ser160 carries the phosphoserine modification. Lys176 is modified (N6-acetyllysine). Residues 179 to 233 are a coiled coil; sequence FWAKAEKEEENRRLEEKRRAEEERQRLEEERRERELQEAARREQRYQEQHRSAGA. Composition is skewed to basic and acidic residues over residues 185–229 and 264–275; these read KEEE…EQHR and HPREIFKQKERA. A disordered region spans residues 185–341; sequence KEEENRRLEE…AQTEEEPTYE (157 aa). Residues 276-286 show a composition bias toward polar residues; the sequence is MSTTSVTSSQP. Phosphoserine occurs at positions 277, 280, 283, and 291. Residues 294 to 303 show a composition bias toward polar residues; the sequence is LQKQLTQPET. Lys296 carries the N6-acetyllysine modification. Thr299 carries the phosphothreonine modification. Phosphotyrosine is present on residues Tyr340 and Tyr350. The region spanning 377–436 is the SH3 domain; it reads GQGLCARALYDYQAADDTEISFDPENLITGIEVIDEGWWRGYGPDGHFGMFPANYVELIE.

Belongs to the ABP1 family. In terms of assembly, interacts with SHANK3, SYN1 and PRAM1. Interacts with SHANK2. Interacts with FGD1, DNM1 and MAP4K1. Interacts with ANKRD54. Interacts with COBL. Interacts with WASL and WIPF1. In terms of tissue distribution, detected in hippocampus neurons and in the Purkinje cell layer in cerebellum (at protein level). Predominantly expressed in brain, thymus and spleen. Also found in testis, heart and lung. Little or no expression detected in ovary or muscle.

It is found in the cytoplasm. The protein localises to the cytoskeleton. It localises to the cell projection. Its subcellular location is the lamellipodium. The protein resides in the ruffle. It is found in the cell cortex. The protein localises to the cytosol. It localises to the synapse. Its subcellular location is the perikaryon. The protein resides in the neuron projection. It is found in the cell membrane. The protein localises to the cytoplasmic vesicle. It localises to the clathrin-coated vesicle membrane. Its subcellular location is the golgi apparatus membrane. The protein resides in the podosome. It is found in the early endosome. The protein localises to the dendrite. It localises to the postsynaptic density. Its function is as follows. Adapter protein that binds F-actin and DNM1, and thereby plays a role in receptor-mediated endocytosis. Plays a role in the reorganization of the actin cytoskeleton, formation of cell projections, such as neurites, in neuron morphogenesis and synapse formation via its interaction with WASL and COBL. Does not bind G-actin and promote actin polymerization by itself. Required for the formation of organized podosome rosettes. May act as a common effector of antigen receptor-signaling pathways in leukocytes. Acts as a key component of the immunological synapse that regulates T-cell activation by bridging TCRs and the actin cytoskeleton to gene activation and endocytic processes. The protein is Drebrin-like protein of Mus musculus (Mouse).